A 4660-amino-acid polypeptide reads, in one-letter code: Low-density lipoprotein receptor-related protein 2 (4660 aa).

The signal sequence occupies residues 1–25; the sequence is MERGAAAAAWMLLLAIAACLEPVSS. The Extracellular portion of the chain corresponds to 26–4425; the sequence is QECGSGNFRC…LSRGIPPGTT (4400 aa). LDL-receptor class A domains follow at residues 27–63, 66–104, 107–143, 141–180, 182–218, and 221–257; these read ECGS…IGCP, SCES…QNCA, TCSA…RNCH, NCHY…ANCT, LCSQ…RNCN, and TCGG…DGCE. Disulfide bonds link cysteine 28/cysteine 40, cysteine 35/cysteine 53, cysteine 47/cysteine 62, cysteine 67/cysteine 80, cysteine 74/cysteine 93, cysteine 87/cysteine 103, cysteine 108/cysteine 120, cysteine 115/cysteine 133, cysteine 127/cysteine 142, cysteine 142/cysteine 157, cysteine 152/cysteine 170, cysteine 164/cysteine 179, cysteine 183/cysteine 195, cysteine 190/cysteine 208, cysteine 202/cysteine 217, cysteine 222/cysteine 234, cysteine 229/cysteine 247, and cysteine 241/cysteine 256. Residues asparagine 159 and asparagine 178 are each glycosylated (N-linked (GlcNAc...) asparagine). An N-linked (GlcNAc...) asparagine glycan is attached at asparagine 259. Positions 264–307 constitute an LDL-receptor class A 7 domain; sequence RCYPREWACPGSGRCISIDKVCDGVPDCPEGDDENNVTSGRTCG. 3 disulfides stabilise this stretch: cysteine 265–cysteine 278, cysteine 272–cysteine 291, and cysteine 285–cysteine 306. N-linked (GlcNAc...) asparagine glycans are attached at residues asparagine 299 and asparagine 340. An EGF-like 1; calcium-binding domain is found at 347–382; that stretch reads DFDDCQIWGICDQKCENRQGRHQCLCEEGYILERGQ. 2 cysteine pairs are disulfide-bonded: cysteine 351/cysteine 361 and cysteine 357/cysteine 370. 4 LDL-receptor class B repeats span residues 435-477, 478-520, 521-567, and 568-612; these read HRVF…DWIN, NKLY…DPTV, GYLF…DLVS, and KRVY…FEEH. Asparagine 462 carries N-linked (GlcNAc...) asparagine glycosylation. An N-linked (GlcNAc...) asparagine glycan is attached at asparagine 657. LDL-receptor class B repeat units follow at residues 752 to 794, 795 to 836, 837 to 880, and 881 to 924; these read STVF…DWIS, RNLY…HPTA, GYMF…DWSA, and SRLY…FKDN. Asparagine 865 carries N-linked (GlcNAc...) asparagine glycosylation. Positions 1024–1060 constitute an LDL-receptor class A 8 domain; the sequence is QCGSLSFPCNNGKCVPSFFRCDGVDDCHDNSDEHQCG. 3 cysteine pairs are disulfide-bonded: cysteine 1025-cysteine 1037, cysteine 1032-cysteine 1050, and cysteine 1044-cysteine 1059. N-linked (GlcNAc...) asparagine glycosylation is present at asparagine 1063. LDL-receptor class A domains lie at 1065-1102, 1109-1145, 1149-1185, 1187-1224, 1230-1268, 1271-1307, and 1312-1350; these read TCSP…QNCP, TCPS…KNCQ, TCQP…AGCV, NCTS…AGCP, MCHP…TGCV, TCSP…KDCP, and HCPS…PLCN. 9 disulfides stabilise this stretch: cysteine 1066/cysteine 1079, cysteine 1073/cysteine 1092, cysteine 1086/cysteine 1101, cysteine 1110/cysteine 1122, cysteine 1117/cysteine 1135, cysteine 1129/cysteine 1144, cysteine 1150/cysteine 1162, cysteine 1157/cysteine 1175, and cysteine 1169/cysteine 1184. Positions 1127, 1130, 1132, 1134, 1140, and 1141 each coordinate Ca(2+). Asparagine 1187 carries N-linked (GlcNAc...) asparagine glycosylation. Cystine bridges form between cysteine 1188–cysteine 1201, cysteine 1195–cysteine 1214, cysteine 1208–cysteine 1223, cysteine 1231–cysteine 1244, cysteine 1238–cysteine 1257, cysteine 1251–cysteine 1267, cysteine 1272–cysteine 1284, cysteine 1279–cysteine 1297, cysteine 1291–cysteine 1306, cysteine 1313–cysteine 1326, cysteine 1320–cysteine 1339, cysteine 1333–cysteine 1349, cysteine 1354–cysteine 1365, cysteine 1361–cysteine 1374, cysteine 1376–cysteine 1389, cysteine 1395–cysteine 1405, cysteine 1401–cysteine 1414, and cysteine 1416–cysteine 1429. Residues tyrosine 1206, aspartate 1209, valine 1211, aspartate 1213, aspartate 1219, and glutamate 1220 each coordinate Ca(2+). 2 N-linked (GlcNAc...) asparagine glycosylation sites follow: asparagine 1328 and asparagine 1341. Residues 1350–1390 form the EGF-like 2 domain; it reads NQDSCSHFNGGCTHQCMQGPFGATCLCPLGYQLANDTKTCE. An N-linked (GlcNAc...) asparagine glycan is attached at asparagine 1384. The EGF-like 3; calcium-binding domain occupies 1391 to 1430; that stretch reads DINECDIPGFCSQHCVNMRGSFRCACDPEYTLESDGRTCK. 3 N-linked (GlcNAc...) asparagine glycosylation sites follow: asparagine 1451, asparagine 1497, and asparagine 1551. 5 LDL-receptor class B repeats span residues 1479 to 1521, 1522 to 1564, 1567 to 1610, 1611 to 1655, and 1656 to 1696; these read GRVF…DWIG, RNLY…DPRM, NVMF…DYPN, RLIY…FEDF, and VYWT…IHPS. N-linked (GlcNAc...) asparagine glycosylation is found at asparagine 1676, asparagine 1733, and asparagine 1811. LDL-receptor class B repeat units follow at residues 1791 to 1833, 1834 to 1883, 1884 to 1931, 1932 to 1973, 1974 to 2014, 2108 to 2157, 2158 to 2202, 2203 to 2246, and 2247 to 2290; these read QFIY…DWVS, RNIY…DPAR, GKLY…DIQE, QKLY…YGSF, LYYS…YHRR, GFIY…DWAA, GNLY…DPKH, RYLF…DHDT, and GYIY…FGES. 3 N-linked (GlcNAc...) asparagine glycosylation sites follow: asparagine 2134, asparagine 2178, and asparagine 2225. A glycan (N-linked (GlcNAc...) asparagine) is linked at asparagine 2396. LDL-receptor class B repeat units lie at residues 2432 to 2478, 2479 to 2519, 2520 to 2563, 2564 to 2605, and 2606 to 2647; these read NRIF…DWIN, RRIY…DPCR, GYMY…DLET, DLLY…YGQY, and IYWT…VVKT. 2 N-linked (GlcNAc...) asparagine glycosylation sites follow: asparagine 2488 and asparagine 2548. LDL-receptor class A domains follow at residues 2700–2738, 2741–2777, 2780–2819, 2822–2861, 2864–2902, 2907–2946, 2949–2991, 2994–3030, 3033–3071, and 3076–3112; these read RCNQ…TVCA, TCRS…AGCL, NCNS…KNCP, TCPP…IYCA, TCRS…DTCG, TCRA…HHCE, NCSS…QNCT, TCSA…RGCS, PCHA…HLCH, and TCPL…KGCG. 18 cysteine pairs are disulfide-bonded: cysteine 2701–cysteine 2713, cysteine 2708–cysteine 2726, cysteine 2720–cysteine 2737, cysteine 2742–cysteine 2754, cysteine 2749–cysteine 2767, cysteine 2761–cysteine 2776, cysteine 2781–cysteine 2794, cysteine 2789–cysteine 2807, cysteine 2801–cysteine 2818, cysteine 2823–cysteine 2836, cysteine 2830–cysteine 2849, cysteine 2843–cysteine 2860, cysteine 2865–cysteine 2878, cysteine 2872–cysteine 2891, cysteine 2885–cysteine 2901, cysteine 2908–cysteine 2920, cysteine 2915–cysteine 2933, and cysteine 2927–cysteine 2945. Asparagine 2782 is a glycosylation site (N-linked (GlcNAc...) asparagine). N-linked (GlcNAc...) asparagine glycosylation is present at asparagine 2810. N-linked (GlcNAc...) asparagine glycosylation is present at asparagine 2949. 18 cysteine pairs are disulfide-bonded: cysteine 2950/cysteine 2967, cysteine 2957/cysteine 2980, cysteine 2974/cysteine 2990, cysteine 2995/cysteine 3007, cysteine 3002/cysteine 3020, cysteine 3014/cysteine 3029, cysteine 3034/cysteine 3046, cysteine 3041/cysteine 3059, cysteine 3053/cysteine 3070, cysteine 3077/cysteine 3089, cysteine 3084/cysteine 3102, cysteine 3096/cysteine 3111, cysteine 3116/cysteine 3128, cysteine 3124/cysteine 3137, cysteine 3139/cysteine 3152, cysteine 3158/cysteine 3169, cysteine 3165/cysteine 3178, and cysteine 3180/cysteine 3193. A glycan (N-linked (GlcNAc...) asparagine) is linked at asparagine 2989. Positions 3112 to 3153 constitute an EGF-like 4 domain; the sequence is GINECLDSSISRCDHNCTDTITSFYCSCLPGYKLMSDKRSCV. A glycan (N-linked (GlcNAc...) asparagine) is linked at asparagine 3127. An EGF-like 5; calcium-binding domain is found at 3154–3194; the sequence is DIDECKESPQLCSQKCENVVGSYICKCAPGYIREPDGKSCR. 4 N-linked (GlcNAc...) asparagine glycosylation sites follow: asparagine 3213, asparagine 3259, asparagine 3317, and asparagine 3357. 5 LDL-receptor class B repeats span residues 3241 to 3283, 3284 to 3326, 3335 to 3378, 3379 to 3421, and 3422 to 3462; these read KRLY…DWVS, RKLY…EHPR, GHVY…DYTN, DLLY…FEDT, and VFWT…YHPY. Residue asparagine 3448 is glycosylated (N-linked (GlcNAc...) asparagine). LDL-receptor class A domains follow at residues 3513–3551, 3554–3592, 3595–3633, 3636–3674, 3679–3717, 3720–3757, 3760–3796, and 3799–3835; these read MCSS…DLCP, FCRL…VLCE, RCES…SHCA, TCRP…DECT, NCDN…QGCE, PCHP…ENCV, ECSE…RDCE, and TCHP…SACP. 24 disulfide bridges follow: cysteine 3514–cysteine 3527, cysteine 3521–cysteine 3540, cysteine 3534–cysteine 3550, cysteine 3555–cysteine 3567, cysteine 3562–cysteine 3580, cysteine 3574–cysteine 3591, cysteine 3596–cysteine 3608, cysteine 3603–cysteine 3621, cysteine 3615–cysteine 3632, cysteine 3637–cysteine 3649, cysteine 3644–cysteine 3662, cysteine 3656–cysteine 3673, cysteine 3680–cysteine 3694, cysteine 3688–cysteine 3707, cysteine 3701–cysteine 3716, cysteine 3721–cysteine 3734, cysteine 3729–cysteine 3747, cysteine 3741–cysteine 3756, cysteine 3761–cysteine 3773, cysteine 3768–cysteine 3786, cysteine 3780–cysteine 3795, cysteine 3800–cysteine 3812, cysteine 3807–cysteine 3825, and cysteine 3819–cysteine 3834. N-linked (GlcNAc...) asparagine glycosylation occurs at asparagine 3566. N-linked (GlcNAc...) asparagine glycosylation is present at asparagine 3682. Asparagine 3840 carries N-linked (GlcNAc...) asparagine glycosylation. 3 LDL-receptor class A domains span residues 3843-3881, 3884-3923, and 3929-3965; these read YCPA…HLCF, PCES…EHCR, and PCTD…TGCN. 9 disulfides stabilise this stretch: cysteine 3844–cysteine 3856, cysteine 3851–cysteine 3869, cysteine 3863–cysteine 3880, cysteine 3885–cysteine 3898, cysteine 3893–cysteine 3911, cysteine 3905–cysteine 3922, cysteine 3930–cysteine 3942, cysteine 3937–cysteine 3955, and cysteine 3949–cysteine 3964. Positions 3968 to 4003 constitute an EGF-like 6 domain; the sequence is DNRTCAENICEQNCTQLSSGGFICSCRPGFKPSTSD. 2 N-linked (GlcNAc...) asparagine glycosylation sites follow: asparagine 3969 and asparagine 3980. 5 disulfide bridges follow: cysteine 3972/cysteine 3981, cysteine 3977/cysteine 3991, cysteine 4013/cysteine 4023, cysteine 4019/cysteine 4032, and cysteine 4034/cysteine 4049. Residues 4009-4050 enclose the EGF-like 7; calcium-binding domain; sequence DINECEEFGICPQSCRNSKGSYECFCVDGFKSMSTHYGERCA. Asparagine 4070 carries N-linked (GlcNAc...) asparagine glycosylation. LDL-receptor class B repeat units lie at residues 4156–4198, 4199–4242, and 4244–4285; these read RHIY…NPKL, GLMF…DYLN, and DRVY…FEDK. Asparagine 4329 carries N-linked (GlcNAc...) asparagine glycosylation. The EGF-like 8 domain occupies 4379–4413; it reads MPPPCRCMHGGNCYFDENELPKCKCSSGYSGEYCE. 3 disulfides stabilise this stretch: cysteine 4383–cysteine 4391, cysteine 4385–cysteine 4401, and cysteine 4403–cysteine 4412. A helical membrane pass occupies residues 4426 to 4446; the sequence is MAVLLTFVIVIIVGALVLVGL. The Cytoplasmic portion of the chain corresponds to 4447 to 4660; it reads FHYRKTGSLL…ANLVKEDSDV (214 aa). Residues 4454–4463 carry the SH3-binding motif; the sequence is SLLPTLPKLP. The PxLPxI/L motif 1; mediates interaction with ANKRA2 motif lies at 4457-4462; it reads PTLPKL. A PxLPxI/L motif 2; mediates interaction with ANKRA2 motif is present at residues 4460–4465; the sequence is PKLPSL. A phosphoserine mark is found at serine 4464 and serine 4467. The short motif at 4522-4527 is the Endocytosis signal element; the sequence is FENPMY. Residues 4559–4582 form a disordered region; sequence NYGRPIDPSEIVPEPKPASPGADE. Residue serine 4577 is modified to Phosphoserine. Residues 4597–4610 are interaction with DAB2; that stretch reads QTTNFENPIYAEMD. The short motif at 4603-4606 is the NPXY motif element; that stretch reads NPIY. Residues 4606-4609 carry the SH2-binding motif; it reads YAEM. The segment at 4617–4660 is disordered; the sequence is VAVAPPPSPSLPAKASKRNLTPGYTATEDTFKDTANLVKEDSDV. The short motif at 4619–4630 is the SH3-binding element; that stretch reads VAPPPSPSLPAK. Serine 4624 carries the phosphoserine modification. Residues 4634-4644 are compositionally biased toward polar residues; it reads RNLTPGYTATE. At threonine 4637 the chain carries Phosphothreonine. Residue serine 4658 is modified to Phosphoserine.

Belongs to the LDLR family. As to quaternary structure, binds plasminogen, extracellular matrix components, plasminogen activator-plasminogen activator inhibitor type I complex, apolipoprotein E-enriched beta-VLDL, lipoprotein lipase, lactoferrin, CLU/clusterin and calcium. Forms a multimeric complex together with LRPAP1. Interacts (via PxLPxI/L motif) with ANKRA2 (via ankyrin repeats). Interacts with LRP2BP. Interacts (via NPXY motif) with DAB2; the interaction is not affected by tyrosine phosphorylation of the NPXY motif. Interacts with MB. Interacts with BMP4. Interacts with the Sonic hedgehog protein N-product which is the active product of SHH. Interacts with CST3 in a calcium-dependent manner. Interacts with the vitamin-D binding protein GC/DBP. Interacts with sex hormone-binding protein SHBG. Interacts with angiotensin-2. Also interacts with angiotensin 1-7. Interacts with APOM. Interacts with selenoprotein SEPP1. Interacts with LEP. Interacts with ALB. Interacts with the antiapoptotic protein BIRC5/survivin. Interacts with matrix metalloproteinase MMP2 in complex with metalloproteinase inhibitor TIMP1. In neurons, forms a trimeric complex with APP and APPB1/FE65. Interacts with LDLRAP1/ARH; mediates trafficking of LRP2 to the endocytic recycling compartment. Does not interact with beta-amyloid protein 40 alone but interacts with the complex composed of beta-amyloid protein 40 and CLU/APOJ. Interacts with MDK. In terms of processing, a fraction undergoes proteolytic cleavage of the extracellular domain at the cell membrane to generate a cytoplasmic tail fragment. This is internalized into the early endosome from where it trafficks in an LDLRAP1/ARH-dependent manner to the endocytic recycling compartment (ERC). In the ERC, it is further cleaved by gamma-secretase to release a fragment which translocates to the nucleus and mediates transcriptional repression. Post-translationally, N-glycosylation is required for ligand binding. In the inner ear, expressed in the lumen of the endolymphatic sac where it localizes to macrophage-like cells as well as to mitochondria-rich and ribosome-rich epithelial cells (at protein level). In the inner ear, expressed in marginal cells of the stria vascularis, epithelial cells at the spiral prominence, epithelial cells of Reissner's membrane facing the cochlear duct, and Kolliker's organ (at protein level). Expressed in the choroid plexus epithelium in the brain (at protein level). In the brain, also expressed in astrocytes (at protein level). Expression also detected in epithelial cells of the kidney glomerulus and proximal tubule, lung, epididymis and yolk sac.

The protein localises to the apical cell membrane. It is found in the endosome lumen. Its subcellular location is the membrane. It localises to the clathrin-coated pit. The protein resides in the cell projection. The protein localises to the dendrite. It is found in the axon. In terms of biological role, multiligand endocytic receptor. Acts together with CUBN to mediate endocytosis of high-density lipoproteins. Mediates receptor-mediated uptake of polybasic drugs such as aprotinin, aminoglycosides and polymyxin B. In the kidney, mediates the tubular uptake and clearance of leptin. Also mediates transport of leptin across the blood-brain barrier through endocytosis at the choroid plexus epithelium. Endocytosis of leptin in neuronal cells is required for hypothalamic leptin signaling and leptin-mediated regulation of feeding and body weight. Mediates endocytosis and subsequent lysosomal degradation of CST3 in kidney proximal tubule cells. Mediates renal uptake of 25-hydroxyvitamin D3 in complex with the vitamin D3 transporter GC/DBP. Mediates renal uptake of metallothionein-bound heavy metals. Together with CUBN, mediates renal reabsorption of myoglobin. Mediates renal uptake and subsequent lysosomal degradation of APOM. Plays a role in kidney selenium homeostasis by mediating renal endocytosis of selenoprotein SEPP1. Mediates renal uptake of the antiapoptotic protein BIRC5/survivin which may be important for functional integrity of the kidney. Mediates renal uptake of matrix metalloproteinase MMP2 in complex with metalloproteinase inhibitor TIMP1. Mediates endocytosis of Sonic hedgehog protein N-product (ShhN), the active product of SHH. Also mediates ShhN transcytosis. In the embryonic neuroepithelium, mediates endocytic uptake and degradation of BMP4, is required for correct SHH localization in the ventral neural tube and plays a role in patterning of the ventral telencephalon. Required at the onset of neurulation to sequester SHH on the apical surface of neuroepithelial cells of the rostral diencephalon ventral midline and to control PTCH1-dependent uptake and intracellular trafficking of SHH. During neurulation, required in neuroepithelial cells for uptake of folate bound to the folate receptor FOLR1 which is necessary for neural tube closure. In the adult brain, negatively regulates BMP signaling in the subependymal zone which enables neurogenesis to proceed. In astrocytes, mediates endocytosis of ALB which is required for the synthesis of the neurotrophic factor oleic acid. Involved in neurite branching. During optic nerve development, required for SHH-mediated migration and proliferation of oligodendrocyte precursor cells. Mediates endocytic uptake and clearance of SHH in the retinal margin which protects retinal progenitor cells from mitogenic stimuli and keeps them quiescent. Plays a role in reproductive organ development by mediating uptake in reproductive tissues of androgen and estrogen bound to the sex hormone binding protein SHBG. Mediates endocytosis of angiotensin-2. Also mediates endocytosis of angiotensin 1-7. Binds to the complex composed of beta-amyloid protein 40 and CLU/APOJ and mediates its endocytosis and lysosomal degradation. Required for embryonic heart development. Required for normal hearing, possibly through interaction with estrogen in the inner ear. In Rattus norvegicus (Rat), this protein is Low-density lipoprotein receptor-related protein 2 (Lrp2).